Reading from the N-terminus, the 250-residue chain is ATP synthase subunit a (250 aa).

6 helical membrane-spanning segments follow: residues 26 to 46, 84 to 104, 114 to 134, 143 to 163, 193 to 213, and 216 to 236; these read FTNA…FLYL, FFPM…LGMV, IIVT…YGFY, LFVP…IEII, FVAS…LPLI, and VALT…FAVL.

This sequence belongs to the ATPase A chain family. In terms of assembly, F-type ATPases have 2 components, CF(1) - the catalytic core - and CF(0) - the membrane proton channel. CF(1) has five subunits: alpha(3), beta(3), gamma(1), delta(1), epsilon(1). CF(0) has three main subunits: a(1), b(2) and c(9-12). The alpha and beta chains form an alternating ring which encloses part of the gamma chain. CF(1) is attached to CF(0) by a central stalk formed by the gamma and epsilon chains, while a peripheral stalk is formed by the delta and b chains.

Its subcellular location is the cell inner membrane. In terms of biological role, key component of the proton channel; it plays a direct role in the translocation of protons across the membrane. This Sinorhizobium medicae (strain WSM419) (Ensifer medicae) protein is ATP synthase subunit a.